A 310-amino-acid chain; its full sequence is ADP-L-glycero-D-manno-heptose-6-epimerase (310 aa).

NADP(+) contacts are provided by residues 10 to 11, 31 to 32, Lys-38, Lys-53, 75 to 79, and Asn-92; these read FI, DN, and EGACS. Tyr-140 acts as the Proton acceptor in catalysis. NADP(+) is bound at residue Lys-144. Substrate is bound at residue Asn-169. Residues Val-170 and Lys-178 each coordinate NADP(+). The Proton acceptor role is filled by Lys-178. Substrate is bound by residues Ser-180, His-187, 201-204, and Arg-209; that span reads FEGS. The residue at position 267 (Lys-267) is an N6-acetyllysine. A substrate-binding site is contributed by Tyr-272.

It belongs to the NAD(P)-dependent epimerase/dehydratase family. HldD subfamily. As to quaternary structure, homopentamer. The cofactor is NADP(+).

The catalysed reaction is ADP-D-glycero-beta-D-manno-heptose = ADP-L-glycero-beta-D-manno-heptose. It functions in the pathway nucleotide-sugar biosynthesis; ADP-L-glycero-beta-D-manno-heptose biosynthesis; ADP-L-glycero-beta-D-manno-heptose from D-glycero-beta-D-manno-heptose 7-phosphate: step 4/4. In terms of biological role, catalyzes the interconversion between ADP-D-glycero-beta-D-manno-heptose and ADP-L-glycero-beta-D-manno-heptose via an epimerization at carbon 6 of the heptose. This Escherichia coli (strain SMS-3-5 / SECEC) protein is ADP-L-glycero-D-manno-heptose-6-epimerase.